A 132-amino-acid chain; its full sequence is Small ribosomal subunit protein uS8 (132 aa).

This sequence belongs to the universal ribosomal protein uS8 family. In terms of assembly, part of the 30S ribosomal subunit. Contacts proteins S5 and S12.

In terms of biological role, one of the primary rRNA binding proteins, it binds directly to 16S rRNA central domain where it helps coordinate assembly of the platform of the 30S subunit. In Geobacter metallireducens (strain ATCC 53774 / DSM 7210 / GS-15), this protein is Small ribosomal subunit protein uS8.